The following is a 78-amino-acid chain: Acyl carrier protein (78 aa).

Residues 1–76 (MSLEDDVKLI…DVITYIKTRQ (76 aa)) form the Carrier domain. Position 36 is an O-(pantetheine 4'-phosphoryl)serine (S36).

This sequence belongs to the acyl carrier protein (ACP) family. Post-translationally, 4'-phosphopantetheine is transferred from CoA to a specific serine of apo-ACP by AcpS. This modification is essential for activity because fatty acids are bound in thioester linkage to the sulfhydryl of the prosthetic group.

The protein resides in the cytoplasm. Its pathway is lipid metabolism; fatty acid biosynthesis. Functionally, carrier of the growing fatty acid chain in fatty acid biosynthesis. This chain is Acyl carrier protein, found in Chlamydia felis (strain Fe/C-56) (Chlamydophila felis).